We begin with the raw amino-acid sequence, 436 residues long: MTVLYAPSGATQLYFHLLRKSPHNRLVVSHQTRRHLMGFVRNALGLDPPPSPEDPTPENRFHPWDQSPSVDLRERAAKIRTLAHCPVTGKDINYTCPLSGIPTHHSREAWEMDKAYHDSKKYEILKKVNIYEHDLRSGRPFPEFDFPQQQGYDKAVNLTNWDLFFYTRSFYSMDTEFQLAAVTKMLSYPITIGSLLHKFSPYSLNPKGPITLEGLKSLAALRYTLYPLENRSLPTTTKNRAMRIFILGARAEAQLPGHVWKQLQFLFPEQSFEIHFIGPECLYKRDKQEYVKSTTPVVQRVDETLKFIYRTNFFEVFHEAQDFFPYDPYMDVFFTFHPGYASPESHGSWMGETMKALLETKCAIFTTGFNKKDLTDDINLVKSKYGKEMDVLMEPVRNVFGSTKWELNDMNPQEVYQFNMYIAGFRGKRYHTIKRQ.

A mitochondrion-targeting transit peptide spans 1–26 (MTVLYAPSGATQLYFHLLRKSPHNRL). Residues 43-66 (ALGLDPPPSPEDPTPENRFHPWDQ) form a disordered region.

The protein belongs to the MSS51 family. In terms of assembly, interacts with COX1 and COX14.

It localises to the mitochondrion inner membrane. In terms of biological role, has a dual role in the assembly of cytochrome oxidase subunit 1 (COX1). It has a regulative function on COX1 synthesis, acting as a translational activator specific for the COX1 mRNA, and it also binds to newly synthesized COX1 protein. Together with COX14, may act as a chaperone that binds efficiently unassembled COX1 and prevents it from unproductive aggregation. When bound to COX1, MSS51 is unable to interact with the COX1 mRNA and translation is halted. This may be a feedback control that ensures that COX1 is only produced as long as potentially harmful assembly intermediates are not accumulating. In Saccharomyces cerevisiae (strain ATCC 204508 / S288c) (Baker's yeast), this protein is Protein MSS51, mitochondrial (MSS51).